The following is a 606-amino-acid chain: UPF0329 protein ECU06_0090 (606 aa).

A disordered region spans residues 317-401; sequence KKEEERREEE…SREACSKERN (85 aa). Positions 328–353 are enriched in basic and acidic residues; the sequence is EKKRKEEVVQRNVEELLRGEEEEKKG. Positions 354–367 are enriched in basic residues; sequence AKAKRKSKKKKKGS. A compositionally biased stretch (basic and acidic residues) spans 381-401; sequence SENREAQEMEDSREACSKERN.

The protein belongs to the UPF0329 family.

The polypeptide is UPF0329 protein ECU06_0090 (Encephalitozoon cuniculi (strain GB-M1) (Microsporidian parasite)).